Reading from the N-terminus, the 426-residue chain is 3-phosphoshikimate 1-carboxyvinyltransferase (426 aa).

Residues K22, S23, and R27 each contribute to the 3-phosphoshikimate site. Residue K22 coordinates phosphoenolpyruvate. Phosphoenolpyruvate contacts are provided by G96 and R124. S170, S171, Q172, S198, D314, N337, and K341 together coordinate 3-phosphoshikimate. Q172 contributes to the phosphoenolpyruvate binding site. D314 serves as the catalytic Proton acceptor. 3 residues coordinate phosphoenolpyruvate: R345, R387, and K412.

It belongs to the EPSP synthase family. Monomer.

The protein localises to the cytoplasm. It catalyses the reaction 3-phosphoshikimate + phosphoenolpyruvate = 5-O-(1-carboxyvinyl)-3-phosphoshikimate + phosphate. It participates in metabolic intermediate biosynthesis; chorismate biosynthesis; chorismate from D-erythrose 4-phosphate and phosphoenolpyruvate: step 6/7. Its function is as follows. Catalyzes the transfer of the enolpyruvyl moiety of phosphoenolpyruvate (PEP) to the 5-hydroxyl of shikimate-3-phosphate (S3P) to produce enolpyruvyl shikimate-3-phosphate and inorganic phosphate. This is 3-phosphoshikimate 1-carboxyvinyltransferase from Aliivibrio fischeri (strain ATCC 700601 / ES114) (Vibrio fischeri).